The sequence spans 281 residues: E3 ubiquitin-protein ligase MARCHF5 (281 aa).

The segment at 9 to 78 (LPQTMDRSCW…PQCNAEYLIV (70 aa)) adopts an RING-CH-type zinc-finger fold. Residues Cys17, Cys20, Cys36, Cys38, His46, Cys49, Cys68, and Cys71 each coordinate Zn(2+). Transmembrane regions (helical) follow at residues 102-122 (FAAA…YGAV), 142-162 (PLFL…GKMI), 212-232 (ILCG…LMFS), and 241-261 (TILG…YFKQ).

The protein resides in the mitochondrion outer membrane. It localises to the endoplasmic reticulum membrane. It catalyses the reaction S-ubiquitinyl-[E2 ubiquitin-conjugating enzyme]-L-cysteine + [acceptor protein]-L-lysine = [E2 ubiquitin-conjugating enzyme]-L-cysteine + N(6)-ubiquitinyl-[acceptor protein]-L-lysine.. The protein operates within protein modification; protein ubiquitination. Functionally, mitochondrial E3 ubiquitin-protein ligase that plays a crucial role in the control of mitochondrial morphology by acting as a positive regulator of mitochondrial fission. May play a role in the prevention of cell senescence acting as a regulator of mitochondrial quality control. The sequence is that of E3 ubiquitin-protein ligase MARCHF5 (MARCHF5) from Gallus gallus (Chicken).